We begin with the raw amino-acid sequence, 343 residues long: Putative dihydroflavonol 4-reductase (343 aa).

Residue Tyr150 coordinates NADP(+).

Belongs to the NAD(P)-dependent epimerase/dehydratase family. Dihydroflavonol-4-reductase subfamily.

It carries out the reaction a (2R,3S,4S)-leucoanthocyanidin + NADP(+) = a (2R,3R)-dihydroflavonol + NADPH + H(+). It functions in the pathway secondary metabolite biosynthesis; flavonoid biosynthesis. The protein is Putative dihydroflavonol 4-reductase (dfrA) of Synechocystis sp. (strain ATCC 27184 / PCC 6803 / Kazusa).